The primary structure comprises 707 residues: Potassium-transporting ATPase ATP-binding subunit (707 aa).

The segment covering 1 to 11 (MNTDTQKHEDA) has biased composition (basic and acidic residues). A disordered region spans residues 1 to 37 (MNTDTQKHEDAMSTTTPARAPHDDAPSGQQPGQGRVG). 4 consecutive transmembrane segments (helical) span residues 61-81 (VMAK…TTAF), 89-109 (WFGW…NLAE), 238-258 (IALN…CATL), and 271-291 (MIVL…ALLS). The active-site 4-aspartylphosphate intermediate is Asp326. ATP-binding positions include Asp363, Glu367, 397–404 (FTAQTRMS), and Lys415. Residues Asp542 and Asp546 each contribute to the Mg(2+) site. Helical transmembrane passes span 612–632 (FAII…LNIM), 640–660 (AILS…PLAL), and 683–703 (LGGL…VSLI).

It belongs to the cation transport ATPase (P-type) (TC 3.A.3) family. Type IA subfamily. The system is composed of three essential subunits: KdpA, KdpB and KdpC.

It localises to the cell membrane. It catalyses the reaction K(+)(out) + ATP + H2O = K(+)(in) + ADP + phosphate + H(+). Its function is as follows. Part of the high-affinity ATP-driven potassium transport (or Kdp) system, which catalyzes the hydrolysis of ATP coupled with the electrogenic transport of potassium into the cytoplasm. This subunit is responsible for energy coupling to the transport system and for the release of the potassium ions to the cytoplasm. The sequence is that of Potassium-transporting ATPase ATP-binding subunit from Streptomyces coelicolor (strain ATCC BAA-471 / A3(2) / M145).